The primary structure comprises 415 residues: Multidrug resistance protein MdtA (415 aa).

The first 21 residues, 1-21 (MKGSYKSRWVIVIVVVIAAIA), serve as a signal peptide directing secretion. Residues 34–47 (SAAPGATKQAQQSP) are compositionally biased toward polar residues. 2 disordered regions span residues 34-60 (SAAPGATKQAQQSPAGGRRGMRSGPLA) and 392-415 (EAQSATTPEEKATSREYAKKGARS). Basic and acidic residues predominate over residues 399–415 (PEEKATSREYAKKGARS).

It belongs to the membrane fusion protein (MFP) (TC 8.A.1) family. In terms of assembly, part of a tripartite efflux system composed of MdtA, MdtB and MdtC.

The protein resides in the cell inner membrane. The MdtABC tripartite complex confers resistance against novobiocin and deoxycholate. This chain is Multidrug resistance protein MdtA, found in Escherichia fergusonii (strain ATCC 35469 / DSM 13698 / CCUG 18766 / IAM 14443 / JCM 21226 / LMG 7866 / NBRC 102419 / NCTC 12128 / CDC 0568-73).